A 99-amino-acid chain; its full sequence is Acylphosphatase-2 (99 aa).

N-acetylserine is present on S2. Residues 9–99 (SVDYEVFGRV…LEYSSFNIRY (91 aa)) enclose the Acylphosphatase-like domain. Active-site residues include R24 and N42. S93 is subject to Phosphoserine.

Belongs to the acylphosphatase family.

The catalysed reaction is an acyl phosphate + H2O = a carboxylate + phosphate + H(+). In terms of biological role, its physiological role is not yet clear. The chain is Acylphosphatase-2 (ACYP2) from Bos taurus (Bovine).